The following is a 740-amino-acid chain: Vacuolar protein sorting-associated protein 51 homolog (740 aa).

Coiled coils occupy residues 65-87 (SATD…VNLL) and 322-344 (RALD…LEVQ).

This sequence belongs to the VPS51 family. In terms of assembly, component of the Golgi-associated retrograde protein (GARP) complex.

Functionally, may act as a component of the GARP complex that is involved in retrograde transport from early and late endosomes to the trans-Golgi network (TGN). In Drosophila melanogaster (Fruit fly), this protein is Vacuolar protein sorting-associated protein 51 homolog.